Here is a 1980-residue protein sequence, read N- to C-terminus: Sodium channel protein type 8 subunit alpha (1980 aa).

2 disordered regions span residues M1 to E20 and R28 to G62. Over M1–S132 the chain is Cytoplasmic. Positions R28–A61 are enriched in basic and acidic residues. An I repeat occupies I114–Q442. The helical transmembrane segment at V133–F151 threads the bilayer. Over S152–S158 the chain is Extracellular. Residues K159–A179 traverse the membrane as a helical segment. Over R180 to P193 the chain is Cytoplasmic. A helical membrane pass occupies residues W194–V211. The Extracellular portion of the chain corresponds to N212–S217. An N-linked (GlcNAc...) asparagine glycan is attached at N215. Residues A218–I234 form a helical membrane-spanning segment. The Cytoplasmic segment spans residues P235–D253. A helical membrane pass occupies residues V254–F273. The Extracellular segment spans residues M274–T355. Residues C281 and C333 are joined by a disulfide bond. N289, N295, and N308 each carry an N-linked (GlcNAc...) asparagine glycan. The N-linked (GlcNAc...) (high mannose) asparagine glycan is linked to N326. Residues F356–L380 constitute an intramembrane region (pore-forming). Residue E373 coordinates Na(+). The Extracellular portion of the chain corresponds to R381 to Y387. The helical transmembrane segment at M388–A408 threads the bilayer. The Cytoplasmic segment spans residues V409–P753. Disordered stretches follow at residues A446–R530 and F568–F602. Over residues P474–K486 the composition is skewed to low complexity. Residues K489–Q500 show a composition bias toward basic residues. Basic and acidic residues-rich tracts occupy residues K501–R530 and D586–F602. Phosphoserine occurs at positions 518 and 520. The stretch at C735–G1007 is one II repeat. The chain crosses the membrane as a helical span at residues F754 to M772. At E773–H783 the chain is on the extracellular side. The chain crosses the membrane as a helical span at residues V784–K803. Topologically, residues L804 to W817 are cytoplasmic. The helical transmembrane segment at N818–V837 threads the bilayer. Residues E838–G839 are Extracellular-facing. A helical membrane pass occupies residues L840–S857. The Cytoplasmic segment spans residues W858 to G873. Residues A874–V892 form a helical membrane-spanning segment. The Extracellular segment spans residues G893–D921. A disulfide bond links C906 and C912. Residues F922–W942 constitute an intramembrane region (pore-forming). Na(+) contacts are provided by E936 and E939. At D943–I955 the chain is on the extracellular side. C944 and C953 form a disulfide bridge. Residues V956–L976 form a helical membrane-spanning segment. Residues L977–W1199 are Cytoplasmic-facing. A disordered region spans residues N1107–V1148. The stretch at L1180–L1495 is one III repeat. A helical transmembrane segment spans residues F1200–F1217. Topologically, residues E1218 to T1230 are extracellular. The chain crosses the membrane as a helical span at residues I1231–L1249. The Cytoplasmic segment spans residues K1250 to A1263. Residues W1264–N1282 form a helical membrane-spanning segment. The Extracellular portion of the chain corresponds to A1283 to G1290. Residues A1291–R1309 traverse the membrane as a helical segment. Over F1310–S1326 the chain is Cytoplasmic. A helical transmembrane segment spans residues I1327 to V1346. Topologically, residues N1347–V1399 are extracellular. A disulfide bridge connects residues C1356 and C1376. Residues N1358, N1372, and N1383 are each glycosylated (N-linked (GlcNAc...) asparagine). Positions G1400–A1421 form an intramembrane region, pore-forming. At A1422–I1438 the chain is on the extracellular side. Residues Y1439–I1460 form a helical membrane-spanning segment. Residues G1461–A1523 lie on the Cytoplasmic side of the membrane. S1497 carries the phosphoserine; by PKC modification. The stretch at I1504–Q1801 is one IV repeat. Residues F1524–V1541 form a helical membrane-spanning segment. Over E1542–N1552 the chain is Extracellular. Residues I1553–L1571 traverse the membrane as a helical segment. Residues K1572–I1583 are Cytoplasmic-facing. A helical membrane pass occupies residues G1584–F1601. Topologically, residues L1602–T1614 are extracellular. Residues L1615–I1631 traverse the membrane as a helical segment. Topologically, residues K1632–A1650 are cytoplasmic. Residues L1651–F1668 form a helical membrane-spanning segment. At G1669–T1690 the chain is on the extracellular side. The segment at residues F1691–P1713 is an intramembrane region (pore-forming). Residues I1714–G1742 are Extracellular-facing. Residues C1721 and C1736 are joined by a disulfide bond. A helical membrane pass occupies residues I1743 to I1765. Topologically, residues L1766–C1980 are cytoplasmic. The IQ domain maps to E1895 to K1924. Positions S1922 to C1980 are disordered. Residues T1938–S1949 show a composition bias toward polar residues. Residues T1951–C1980 are compositionally biased toward basic and acidic residues.

The protein belongs to the sodium channel (TC 1.A.1.10) family. Nav1.6/SCN8A subfamily. As to quaternary structure, the voltage-sensitive sodium channel consists of an ion-conducting pore-forming alpha subunit regulated by one or more beta-1 (SCN1B), beta-2 (SCN2B), beta-3 (SCN3B) and/or beta-4 (SCN4B) subunits. Beta-1 (SCN1B) and beta-3 (SCN3B) are non-covalently associated with alpha, while beta-2 (SCN2B) and beta-4 (SCN4B) are covalently linked by disulfide bonds. Interacts with NEDD4 and NEDD4L. Interacts with FGF13. Interacts with FGF14, GBG3, GBB2 and SCN1B. Interacts with TMEM233. Interacts with the conotoxin GVIIJ. Interacts with the spider beta/delta-theraphotoxin-Pre1a. Interacts with CALM1; the interaction modulates the inactivation rate of SCN8A. May be ubiquitinated by NEDD4L; which would promote its endocytosis. Post-translationally, phosphorylation at Ser-1497 by PKC in a highly conserved cytoplasmic loop slows inactivation of the sodium channel and reduces peak sodium currents. Expressed in the hippocampus with increased expression in epileptic tissue compared to normal adjacent tissue (at protein level). As to expression, expressed in non-neuronal tissues, such as monocytes/macrophages.

Its subcellular location is the cell membrane. It localises to the cell projection. The protein localises to the axon. It is found in the cytoplasmic vesicle. The protein resides in the podosome. It catalyses the reaction Na(+)(in) = Na(+)(out). With respect to regulation, inhibited by tetrodotoxin and, more weakly, by its metabolite 4,9-ah-tetrodotoxin. Its function is as follows. Pore-forming subunit of a voltage-gated sodium channel complex assuming opened or closed conformations in response to the voltage difference across membranes and through which sodium ions selectively pass along their electrochemical gradient. Contributes to neuronal excitability by regulating action potential threshold and propagation. In terms of biological role, more specifically expressed in non-neuronal cells, could play a role in sodium release from intracellular compartments and participate in the control of podosomes formation and macrophages adhesion and movement. The polypeptide is Sodium channel protein type 8 subunit alpha (Homo sapiens (Human)).